A 431-amino-acid polypeptide reads, in one-letter code: Glutamate-1-semialdehyde 2,1-aminomutase (431 aa).

Lysine 265 bears the N6-(pyridoxal phosphate)lysine mark.

This sequence belongs to the class-III pyridoxal-phosphate-dependent aminotransferase family. HemL subfamily. In terms of assembly, homodimer. Pyridoxal 5'-phosphate serves as cofactor.

The protein resides in the cytoplasm. It carries out the reaction (S)-4-amino-5-oxopentanoate = 5-aminolevulinate. The protein operates within porphyrin-containing compound metabolism; protoporphyrin-IX biosynthesis; 5-aminolevulinate from L-glutamyl-tRNA(Glu): step 2/2. The chain is Glutamate-1-semialdehyde 2,1-aminomutase from Vibrio atlanticus (strain LGP32) (Vibrio splendidus (strain Mel32)).